Reading from the N-terminus, the 425-residue chain is Synaptotagmin-4 (425 aa).

At 1 to 16 the chain is on the vesicular side; the sequence is MAPITTSRVEFDEIPT. The chain crosses the membrane as a helical span at residues 17–37; the sequence is VVGIFSAFGLVFTVSLFAWIC. Over 38-425 the chain is Cytoplasmic; the sequence is CQRRSAKSNK…IAKWHMLCDG (388 aa). The disordered stretch occupies residues 127–147; that stretch reads TETEKEANSPESLKSSTSLTS. A Phosphoserine; by MAPK8 modification is found at Ser135. The segment covering 137-146 has biased composition (low complexity); it reads ESLKSSTSLT. 2 consecutive C2 domains span residues 153–274 and 287–420; these read KLGT…MLMT and GRGE…AKWH. The Ca(2+) site is built by Asp246, Ser249, and Asp252.

The protein belongs to the synaptotagmin family. In terms of assembly, interacts with KIF1A; the interaction increases in presence of calcium and decreases when SYT4 is phosphorylated at Ser-135. Requires Ca(2+) as cofactor. Phosphorylation at Ser-135 by MAPK8/JNK1 reduces interaction with KIF1A and neuronal dense core vesicles mobility. As to expression, expressed in many regions of the nervous system but is undetectable in extra neural tissues.

It localises to the cytoplasmic vesicle. The protein localises to the secretory vesicle. It is found in the neuronal dense core vesicle membrane. In terms of biological role, synaptotagmin family member which does not bind Ca(2+). Plays a role in dendrite formation by melanocytes. Its function is as follows. Synaptotagmin family member which does not bind Ca(2+). Involved in neuronal dense core vesicles (DCVs) mobility through its interaction with KIF1A. Upon increased neuronal activity, phosphorylation by MAPK8/JNK1 destabilizes the interaction with KIF1A and captures DCVs to synapses. Plays a role in dendrite formation by melanocytes. This chain is Synaptotagmin-4 (Syt4), found in Mus musculus (Mouse).